Consider the following 970-residue polypeptide: Polycystin-2 (970 aa).

The segment covering 1 to 11 (MVNSSRVQPQQ) has biased composition (polar residues). Positions 1-182 (MVNSSRVQPQ…GDPLHRHLPL (182 aa)) are disordered. Topologically, residues 1-221 (MVNSSRVQPQ…STDREKYLKS (221 aa)) are cytoplasmic. The segment covering 25–45 (GPGRLMAGGAIAGAGLAAPGG) has biased composition (low complexity). Residues 47 to 60 (REQRGLEIEMERIR) are compositionally biased toward basic and acidic residues. Residues 62-83 (AAARDPPAGASASPSPPLSSCS) show a composition bias toward low complexity. 2 positions are modified to phosphoserine: Ser76 and Ser80. Acidic residues predominate over residues 95 to 109 (EAEEEEEEEEVEGEE). Low complexity predominate over residues 125–138 (RRSASSSAVSSAGA). Arg139 is subject to Omega-N-methylarginine. Residues 139–148 (RGRGLGGYHG) show a composition bias toward gly residues. The chain crosses the membrane as a helical span at residues 222 to 243 (VLRELATYLLFLIVLCILTYGM). The Extracellular segment spans residues 244–470 (MSSSVYYYTR…PVKLIRYVTT (227 aa)). Asn301, Asn307, and Asn330 each carry an N-linked (GlcNAc...) asparagine glycan. Cysteines 333 and 346 form a disulfide. N-linked (GlcNAc...) asparagine glycans are attached at residues Asn364 and Asn377. Residues 471–491 (FDFFLAACEIIFCLFILYYVV) traverse the membrane as a helical segment. The Cytoplasmic segment spans residues 492–507 (EEILEIRIHKLHYFRS). A helical membrane pass occupies residues 508–528 (FWNCLDVVIIVLSVVAIGINI). Residues 529 to 554 (YRTSNVEALLQFLEDQNTFPNFENLA) are Extracellular-facing. A helical transmembrane segment spans residues 555-575 (YWQTQFNNIAAVIVFFVWIKL). Gln559 serves as a coordination point for cholesterol. The Cytoplasmic segment spans residues 576–599 (FKFINFNRTMSQLSTTMSRCAKDL). The helical transmembrane segment at 600 to 621 (FGFAIMFFIIFLAYAQLAYLVF) threads the bilayer. Residues 622 to 633 (GTQVDDFSTFQE) lie on the Extracellular side of the membrane. An intramembrane region (pore-forming) is located at residues 634–648 (CIFTQFRIILGDINF). Leu643 is a Ca(2+) binding site. The Selectivity filter signature appears at 643–645 (LGD). At 649 to 656 (AEIEEANR) the chain is on the extracellular side. A helical transmembrane segment spans residues 657 to 677 (VLGPIYFTTFVFFMFFILLNM). At 678 to 970 (FLAIINDTYS…GGNGSANIHV (293 aa)) the chain is on the cytoplasmic side. The region spanning 750-785 (KGHTDAEIEAIFTKYDQDGDQELTEHEHQQMRDDLE) is the EF-hand domain. 5 residues coordinate Ca(2+): Asp765, Asp767, Asp769, Glu771, and Glu776. Positions 766–833 (QDGDQELTEH…HSSRRRGSIS (68 aa)) are disordered. Residues 772-797 (LTEHEHQQMRDDLEKEREDLDLDHSS) show a composition bias toward basic and acidic residues. The segment covering 798–809 (LPRPMSSRSFPR) has biased composition (low complexity). A phosphoserine mark is found at Ser803, Ser810, Ser814, and Ser831. The linker stretch occupies residues 805–824 (RSFPRSLDDSEEEDDDDSGH). The important for interaction with PACS1 and PACS2 stretch occupies residues 812–823 (DDSEEEDDDDSG). Residues 835 to 874 (GVSYEEFQVLVRRVDRMEHSIGSIVSKIDAVIVKLEIMER) adopt a coiled-coil conformation. The tract at residues 921–970 (DDAASQISHGLGTPLGLNGQPRPRSSRPSSSQSTEGMEGGGGNGSANIHV) is disordered. The span at 940-956 (QPRPRSSRPSSSQSTEG) shows a compositional bias: low complexity.

The protein belongs to the polycystin family. Homotetramer. Component of the heterotetrameric polycystin channel complex with PKD1; the tetramer contains one PKD1 chain and three PKD2 chains. Isoform 1 interacts with PKD1 while isoform 3 does not. Interacts with PKD1L1; probably forms a Ca(2+) channel. Interacts with CD2AP. Interacts with HAX1. Interacts with NEK8. Part of a complex containing AKAP5, ADCY5, ADCY6 and PDE4C. Interacts (via C-terminus) with TRPV4 (via C-terminus). Interacts (via C-terminal acidic region) with PACS1 and PACS2; these interactions retain the protein in the endoplasmic reticulum and prevent trafficking to the cell membrane. Interacts with TMEM33. Form a heterotetramer with TRPC1 with a 2:2 stoichiometry; has distinct channel properties separate from PKD2 or TRPC1 homomers alone. Interacts with TMEM120A; TMEM120A inhibits PKD2 channel activity through the physical association of PKD2 with TMEM120A. Interacts (via N-terminus) with RYR2; regulates RYR2 channel activity. Post-translationally, N-glycosylated. The four subunits in a tetramer probably differ in the extent of glycosylation; simultaneous glycosylation of all experimentally validated sites would probably create steric hindrance. In terms of processing, phosphorylated. Phosphorylation is important for protein function; a mutant that lacks the N-terminal phosphorylation sites cannot complement a zebrafish pkd2-deficient mutant. PKD-mediated phosphorylation at the C-terminus regulates its function in the release of Ca(2+) stores from the endoplasmic reticulum. Phosphorylation at Ser-814 regulates PKD2 trafficking. Phosphorylation at Ser-76 is required for PKD2 trafficking to or retention at the lateral plasma membrane. Phosphorylation at Ser-803, Ser-814 and Ser-831 regulates PKD2 channel activity. Sumoylated by SUMO1; sumoylation regulates PKD2 membrane recycling and is necessary for intravascular pressure-induced arterial contractility. As to expression, expressed in mesenchymally derived structures in the developing embryo at day 12.5. In adult, mostly expressed in kidney.

Its subcellular location is the cell projection. It localises to the cilium membrane. The protein localises to the endoplasmic reticulum membrane. It is found in the cell membrane. The protein resides in the basolateral cell membrane. Its subcellular location is the cytoplasmic vesicle membrane. It localises to the golgi apparatus. The protein localises to the vesicle. It is found in the secreted. The protein resides in the extracellular exosome. It carries out the reaction K(+)(in) = K(+)(out). The enzyme catalyses Na(+)(in) = Na(+)(out). It catalyses the reaction Ca(2+)(in) = Ca(2+)(out). With respect to regulation, channel activity is regulated by phosphorylation. Channel activity is regulated by intracellular Ca(2+). At the endoplasmic reticulum membrane (ER), TMEM33 enhances its channel activity. TMEM120A inhibits the channel activity of PKD2, and mediates mechanosensitivity of the PKD2-TMEM120A channel complex. PKD1/PKD2 complex on the plasma membrane is activated by PKD1 N-terminus. Its function is as follows. Forms a nonselective cation channel. Can function as a homotetrameric ion channel or can form heteromer with PKD1. Displays distinct function depending on its subcellular localization and regulation by its binding partners. Functions as a cation channel, with a preference for monovalent cations over divalent cations that allows K(+), Na(+) and Ca(2+) influx, with low selectivity for Ca(2+). Involved in fluid-flow mechanosensation in the primary cilium in renal epithelium. In the endoplasmic reticulum, likely functions as a K(+) channel to facilitate Ca(2+) release. The heterotetrameric PKD1/PKD2 channel has higher Ca(2+) permeability than homomeric PKD2 channel and acts as a primarily Ca(2+)-permeable channel. Interacts with and acts as a regulator of a number of other channels, such as TRPV4, TRPC1, IP3R, RYR2, ultimately further affecting intracellular signaling, to modulate intracellular Ca(2+) signaling. Together with TRPV4, forms mechano- and thermosensitive channels in cilium. In cardiomyocytes, PKD2 modulates Ca(2+) release from stimulated RYR2 receptors through direct association. Also involved in left-right axis specification via its role in sensing nodal flow; forms a complex with PKD1L1 in cilia to facilitate flow detection in left-right patterning. Acts as a regulator of cilium length together with PKD1. Mediates systemic blood pressure and contributes to the myogenic response in cerebral arteries though vasoconstriction. The chain is Polycystin-2 from Bos taurus (Bovine).